A 1493-amino-acid polypeptide reads, in one-letter code: Mitogen-activated protein kinase kinase kinase 1 (1493 aa).

Residues 1 to 23 (MAAAAGDRASSSGFPGAAAASPE) are compositionally biased toward low complexity. Disordered stretches follow at residues 1 to 178 (MAAA…PEER) and 194 to 300 (HEWL…EETS). Ala2 bears the N-acetylalanine mark. Ser21 is modified (phosphoserine). Positions 24-35 (AGGGGGGGGALQ) are enriched in gly residues. The segment covering 36 to 46 (GSGAPAAGAAG) has biased composition (low complexity). A compositionally biased stretch (pro residues) spans 89 to 99 (PPCPSTSPSPE). A compositionally biased stretch (low complexity) spans 140-156 (ARSPAGAEPPSAAAPSG). Ser142 is modified (phosphoserine). Residues 157–178 (REMENKETLKGLHKMEDRPEER) show a composition bias toward basic and acidic residues. Residues 235–256 (SAAPAPKGRRSPSPGSSPSGRS) show a composition bias toward low complexity. Ser270 is subject to Phosphoserine. Thr280 bears the Phosphothreonine mark. Phosphoserine is present on residues Ser287, Ser292, and Ser295. Residues 333 to 361 (YRVFIGPQNCSCGRGAFCIHLLFVMLRVF) form an SWIM-type zinc finger. The span at 411 to 428 (SNSHTLSSSSTSTSSSEN) shows a compositional bias: low complexity. The interval 411–431 (SNSHTLSSSSTSTSSSENSIK) is disordered. The RING-type zinc-finger motif lies at 438–487 (CPICLLGMLDEESLTVCEDGCRNKLHHHCMSIWAEECRRNREPLICPLCR). 2 positions are modified to phosphoserine: Ser502 and Ser526. 2 disordered regions span residues 506–531 (SPAS…RRNQ) and 895–914 (EHTV…RLSA). Residues 512-527 (AVQQPSSPQQPVAGSQ) are compositionally biased toward low complexity. Ser915 bears the Phosphoserine mark. Disordered stretches follow at residues 927-957 (SVGL…LNSS) and 992-1066 (PCKI…TLDL). A compositionally biased stretch (polar residues) spans 998–1013 (ASPQTQRKFSLQFQRN). Residues Ser999 and Ser1024 each carry the phosphoserine modification. Residues 1049 to 1063 (GSTSKLGDATKSSMT) show a composition bias toward polar residues. Positions 1224–1489 (WLKGQQIGLG…SRELLKHPVF (266 aa)) constitute a Protein kinase domain. ATP is bound by residues 1230-1238 (IGLGAFSSC) and Lys1253. The active-site Proton acceptor is the Asp1350. Phosphothreonine; by autocatalysis occurs at positions 1381 and 1393.

This sequence belongs to the protein kinase superfamily. STE Ser/Thr protein kinase family. MAP kinase kinase kinase subfamily. Binds both upstream activators and downstream substrates in multimolecular complexes through its N-terminus. Oligomerizes after binding MAP4K2 or TRAF2. Interacts with AXIN1. Interacts (via the kinase catalytic domain) with STK38. Interacts with GRIPAP1. Mg(2+) is required as a cofactor. Post-translationally, autophosphorylated. As to expression, highly expressed in the heart and spleen while a lower level expression is seen in the liver.

The enzyme catalyses L-seryl-[protein] + ATP = O-phospho-L-seryl-[protein] + ADP + H(+). It catalyses the reaction L-threonyl-[protein] + ATP = O-phospho-L-threonyl-[protein] + ADP + H(+). With respect to regulation, activated by autophosphorylation on Thr-1381 and Thr-1393 following oligomerization. Its function is as follows. Component of a protein kinase signal transduction cascade. Activates the ERK and JNK kinase pathways by phosphorylation of MAP2K1 and MAP2K4. May phosphorylate the MAPK8/JNK1 kinase. Activates CHUK and IKBKB, the central protein kinases of the NF-kappa-B pathway. This is Mitogen-activated protein kinase kinase kinase 1 (Map3k1) from Mus musculus (Mouse).